The primary structure comprises 314 residues: Coiled-coil domain-containing protein 42 like-2 (314 aa).

Coiled-coil stretches lie at residues 34–139 and 175–233; these read RLLE…RQEK and NKLL…WESR.

Belongs to the CFAP73 family.

This is Coiled-coil domain-containing protein 42 like-2 from Xenopus laevis (African clawed frog).